Here is a 1350-residue protein sequence, read N- to C-terminus: uncharacterized protein (1350 aa).

2 disordered regions span residues 348 to 371 (SLVG…LDDS) and 923 to 944 (SKME…RGTG). The segment covering 923–932 (SKMEGGERDA) has biased composition (basic and acidic residues).

This is an uncharacterized protein from Ictalurid herpesvirus 1 (strain Auburn) (IcHV-1).